Reading from the N-terminus, the 94-residue chain is Long neurotoxin LNTX1 (94 aa).

The signal sequence occupies residues methionine 1 to threonine 21. Disulfide bonds link cysteine 24–cysteine 43, cysteine 36–cysteine 64, cysteine 49–cysteine 53, cysteine 68–cysteine 79, and cysteine 80–cysteine 85.

This sequence belongs to the three-finger toxin family. Long-chain subfamily. Type II alpha-neurotoxin sub-subfamily. In terms of assembly, monomer. Expressed by the venom gland.

The protein resides in the secreted. Functionally, binds with high affinity to muscular (alpha-1/CHRNA1) and neuronal (alpha-7/CHRNA7) nicotinic acetylcholine receptor (nAChR) and inhibits acetylcholine from binding to the receptor, thereby impairing neuromuscular and neuronal transmission. Recombinant LNTX1 leads to a functional block of the muscle-type acetylcholine receptors. Has a cytotoxic activity. This chain is Long neurotoxin LNTX1, found in Ophiophagus hannah (King cobra).